The primary structure comprises 446 residues: Glucose-6-phosphate isomerase (446 aa).

E288 functions as the Proton donor in the catalytic mechanism. Residues H309 and K423 contribute to the active site.

The protein belongs to the GPI family.

Its subcellular location is the cytoplasm. It carries out the reaction alpha-D-glucose 6-phosphate = beta-D-fructose 6-phosphate. It functions in the pathway carbohydrate biosynthesis; gluconeogenesis. Its pathway is carbohydrate degradation; glycolysis; D-glyceraldehyde 3-phosphate and glycerone phosphate from D-glucose: step 2/4. In terms of biological role, catalyzes the reversible isomerization of glucose-6-phosphate to fructose-6-phosphate. This chain is Glucose-6-phosphate isomerase, found in Lacticaseibacillus casei (strain BL23) (Lactobacillus casei).